A 312-amino-acid chain; its full sequence is Dihydroorotate dehydrogenase B (NAD(+)), catalytic subunit (312 aa).

Residues Ser-23 and 47 to 48 (KA) contribute to the FMN site. Substrate-binding positions include Lys-47 and 71-75 (NAIGL). FMN contacts are provided by Asn-102 and Asn-130. Position 130 (Asn-130) interacts with substrate. The active-site Nucleophile is the Cys-133. 2 residues coordinate FMN: Lys-168 and Ile-194. Position 195 to 196 (195 to 196 (NT)) interacts with substrate. Residues Gly-220, 246 to 247 (GG), and 268 to 269 (GT) each bind FMN.

It belongs to the dihydroorotate dehydrogenase family. Type 1 subfamily. As to quaternary structure, heterotetramer of 2 PyrK and 2 PyrD type B subunits. Requires FMN as cofactor.

Its subcellular location is the cytoplasm. The catalysed reaction is (S)-dihydroorotate + NAD(+) = orotate + NADH + H(+). It functions in the pathway pyrimidine metabolism; UMP biosynthesis via de novo pathway; orotate from (S)-dihydroorotate (NAD(+) route): step 1/1. Catalyzes the conversion of dihydroorotate to orotate with NAD(+) as electron acceptor. This Enterococcus faecalis (strain ATCC 47077 / OG1RF) protein is Dihydroorotate dehydrogenase B (NAD(+)), catalytic subunit (pyrDB).